A 296-amino-acid polypeptide reads, in one-letter code: Sulfotransferase 6B1 (296 aa).

Residue histidine 112 is the Proton acceptor of the active site. Residues arginine 134, serine 142, tyrosine 197, and 253–255 (RKG) contribute to the 3'-phosphoadenylyl sulfate site.

This sequence belongs to the sulfotransferase 1 family.

It is found in the cytoplasm. Its subcellular location is the cytosol. It carries out the reaction thyroxine + 3'-phosphoadenylyl sulfate = thyroxine sulfate + adenosine 3',5'-bisphosphate + H(+). Its activity is regulated as follows. Strongly inhibited by the divalent metal cations Fe(2+), Hg(2+), Co(2+), Zn(2+), Cu(2+) and Cd(2+). Sulfotransferase that utilizes 3'-phospho-5'-adenylyl sulfate (PAPS) as sulfonate donor to catalyze the sulfate conjugation of a variety of xenobiotic and endogenous compounds, including dopamine, T3 (triiodo-L-thyronine), T4 (thyroxine), flavonoids, isoflavonoids, and other phenolic compounds. The protein is Sulfotransferase 6B1 of Danio rerio (Zebrafish).